Here is a 946-residue protein sequence, read N- to C-terminus: Protein dct-6 (946 aa).

Positions 326 to 363 (YMDMNDQIEQMIALLVDQLEELEKLEQLCDEVQKTGNQ) form a coiled coil.

In terms of biological role, may have a role in tumor suppression. This chain is Protein dct-6, found in Caenorhabditis briggsae.